The following is a 244-amino-acid chain: Phosphoadenosine 5'-phosphosulfate reductase (244 aa).

Residue Cys-239 is the Nucleophile; cysteine thiosulfonate intermediate of the active site.

Belongs to the PAPS reductase family. CysH subfamily.

Its subcellular location is the cytoplasm. The enzyme catalyses [thioredoxin]-disulfide + sulfite + adenosine 3',5'-bisphosphate + 2 H(+) = [thioredoxin]-dithiol + 3'-phosphoadenylyl sulfate. The protein operates within sulfur metabolism; hydrogen sulfide biosynthesis; sulfite from sulfate: step 3/3. Catalyzes the formation of sulfite from phosphoadenosine 5'-phosphosulfate (PAPS) using thioredoxin as an electron donor. This is Phosphoadenosine 5'-phosphosulfate reductase from Citrobacter koseri (strain ATCC BAA-895 / CDC 4225-83 / SGSC4696).